Consider the following 349-residue polypeptide: MVDVKFEERRFESPGQLQLLDRQEAEEEEEDCFESIDKLISQGINAGDVKKLQDAGIYTCNGLMMHTKKNLTGIKGLSEAKVDKICEAAEKLVNVGYITGSDVLLKRKSVIRITTGSQALDELLGGGIETLQITEAFGEFRSGKTQIAHTLCVSTQLPVSMHGGNGKVAYIDTEGTFRPDRIVPIAERFGMDASAVLDNIIYARAYTYEHQYNLLLALAAKMSEEPFRLLIVDSVIALFRVDFSGRGELAERQQKLAQMLSRLTKIAEEFNVAVYMTNQVIADPGGGMFISDPKKPAGGHVLAHAATVRLMLRKGKGEQRVCKIFDAPNLPESEAVFQITPGGVADAKD.

Position 138 to 145 (glycine 138 to threonine 145) interacts with ATP. Residue arginine 240 coordinates dsDNA. SsDNA contacts are provided by arginine 240, phenylalanine 243, arginine 246, arginine 252, and arginine 320. Residues arginine 246 and arginine 252 each coordinate dsDNA.

The protein belongs to the RecA family. DMC1 subfamily. Double stacked ring-shaped homooctamer.

It is found in the nucleus. Its function is as follows. May participate in meiotic recombination. In Lilium longiflorum (Trumpet lily), this protein is Meiotic recombination protein DMC1 homolog (LIM15).